A 101-amino-acid chain; its full sequence is Apolipoprotein C-II (101 aa).

The first 22 residues, 1–22 (MGIRYLLVLVLVLLVLGCEVQG), serve as a signal peptide directing secretion. Positions 66–74 (TMDEKIREI) are lipid binding. A lipoprotein lipase cofactor region spans residues 78-101 (STAAVSTYAGIFTDQLLSMLKGDQ).

It belongs to the apolipoprotein C2 family. Post-translationally, proapolipoprotein C-II is synthesized as a sialic acid containing glycoprotein which is subsequently desialylated prior to its proteolytic processing. Proapolipoprotein C-II, the major form found in plasma undergoes proteolytic cleavage of its N-terminal hexapeptide to generate apolipoprotein C-II, which occurs as the minor form in plasma.

It localises to the secreted. In terms of biological role, component of chylomicrons, very low-density lipoproteins (VLDL), low-density lipoproteins (LDL), and high-density lipoproteins (HDL) in plasma. Plays an important role in lipoprotein metabolism as an activator of lipoprotein lipase. Both proapolipoprotein C-II and apolipoprotein C-II can activate lipoprotein lipase. This Leptonychotes weddellii (Weddell seal) protein is Apolipoprotein C-II (APOC2).